We begin with the raw amino-acid sequence, 209 residues long: Thiamine-phosphate synthase (209 aa).

4-amino-2-methyl-5-(diphosphooxymethyl)pyrimidine-binding positions include 32–36 (QLRMK) and Asp-64. The Mg(2+) site is built by Asp-65 and Asp-84. A 4-amino-2-methyl-5-(diphosphooxymethyl)pyrimidine-binding site is contributed by Thr-103. Position 129 to 131 (129 to 131 (TTT)) interacts with 2-[(2R,5Z)-2-carboxy-4-methylthiazol-5(2H)-ylidene]ethyl phosphate. Lys-132 provides a ligand contact to 4-amino-2-methyl-5-(diphosphooxymethyl)pyrimidine. Gly-165 contributes to the 2-[(2R,5Z)-2-carboxy-4-methylthiazol-5(2H)-ylidene]ethyl phosphate binding site.

The protein belongs to the thiamine-phosphate synthase family. Requires Mg(2+) as cofactor.

The enzyme catalyses 2-[(2R,5Z)-2-carboxy-4-methylthiazol-5(2H)-ylidene]ethyl phosphate + 4-amino-2-methyl-5-(diphosphooxymethyl)pyrimidine + 2 H(+) = thiamine phosphate + CO2 + diphosphate. It carries out the reaction 2-(2-carboxy-4-methylthiazol-5-yl)ethyl phosphate + 4-amino-2-methyl-5-(diphosphooxymethyl)pyrimidine + 2 H(+) = thiamine phosphate + CO2 + diphosphate. It catalyses the reaction 4-methyl-5-(2-phosphooxyethyl)-thiazole + 4-amino-2-methyl-5-(diphosphooxymethyl)pyrimidine + H(+) = thiamine phosphate + diphosphate. It functions in the pathway cofactor biosynthesis; thiamine diphosphate biosynthesis; thiamine phosphate from 4-amino-2-methyl-5-diphosphomethylpyrimidine and 4-methyl-5-(2-phosphoethyl)-thiazole: step 1/1. Functionally, condenses 4-methyl-5-(beta-hydroxyethyl)thiazole monophosphate (THZ-P) and 2-methyl-4-amino-5-hydroxymethyl pyrimidine pyrophosphate (HMP-PP) to form thiamine monophosphate (TMP). The sequence is that of Thiamine-phosphate synthase from Bacteroides thetaiotaomicron (strain ATCC 29148 / DSM 2079 / JCM 5827 / CCUG 10774 / NCTC 10582 / VPI-5482 / E50).